The primary structure comprises 164 residues: Interferon gamma (164 aa).

Residues 1–19 form the signal peptide; sequence MTCQTYNLFVLSVIMIYYG. N-linked (GlcNAc...) asparagine glycosylation is found at asparagine 42 and asparagine 61.

The protein belongs to the type II (or gamma) interferon family. Homodimer.

It localises to the secreted. In terms of biological role, produced by lymphocytes activated by specific antigens or mitogens. IFN-gamma, in addition to having antiviral activity, has important immunoregulatory functions. It is a potent activator of macrophages, it has antiproliferative effects on transformed cells and it can potentiate the antiviral and antitumor effects of the type I interferons. This is Interferon gamma (IFNG) from Numida meleagris (Helmeted guineafowl).